Reading from the N-terminus, the 344-residue chain is MACLTLALDAMGGDFGPCVTVPASLQALASNPQLKLLLVGNPDTITPLLANADSLLLERLQVIPAEHVIASDAKPSQAIRASRGTSMRVALELVKNGEAAACVSAGNTGALMGLAKMMIKPLEGIARPALMTVIPNQRRSKTVVLDLGANVECDSTMLVQFAVMGSVMAEEVVGIVEPRVALLNIGEEENKGLDNIREAAAVLKNTPAINYIGYLEGNDLLTGKTDVMVCDGFVGNVTLKTMEGVIRMFLSLLKPSGEGSKQSWWLKLIGRWLQKRVAKRFGHLNPDQYNGACLLGLRGIVIKSHGAANQRAFAVAIEQAVQAVQRQVPERIAARLEAVLPKSD.

This sequence belongs to the PlsX family. In terms of assembly, homodimer. Probably interacts with PlsY.

It is found in the cytoplasm. The enzyme catalyses a fatty acyl-[ACP] + phosphate = an acyl phosphate + holo-[ACP]. The protein operates within lipid metabolism; phospholipid metabolism. Catalyzes the reversible formation of acyl-phosphate (acyl-PO(4)) from acyl-[acyl-carrier-protein] (acyl-ACP). This enzyme utilizes acyl-ACP as fatty acyl donor, but not acyl-CoA. This chain is Phosphate acyltransferase, found in Yersinia pestis bv. Antiqua (strain Antiqua).